Reading from the N-terminus, the 311-residue chain is Ribosomal RNA small subunit methyltransferase H (311 aa).

S-adenosyl-L-methionine is bound by residues 32 to 34 (AGH), Asp52, Phe79, Asp100, and Gln107.

Belongs to the methyltransferase superfamily. RsmH family.

It is found in the cytoplasm. It catalyses the reaction cytidine(1402) in 16S rRNA + S-adenosyl-L-methionine = N(4)-methylcytidine(1402) in 16S rRNA + S-adenosyl-L-homocysteine + H(+). Its function is as follows. Specifically methylates the N4 position of cytidine in position 1402 (C1402) of 16S rRNA. This Staphylococcus aureus (strain Mu3 / ATCC 700698) protein is Ribosomal RNA small subunit methyltransferase H.